The following is a 116-amino-acid chain: MNTVRVTFLLVFVLAVSLGQADKDENRMEMQEKTEQGKSYLDFAENLLLQKLEELEAKLLEEDSEESRNSRQKRCIGEGVPCDENDPRCCSGLVCLKPTLHGIWYKSYYCYKKWSA.

An N-terminal signal peptide occupies residues 1–21 (MNTVRVTFLLVFVLAVSLGQA). Positions 22 to 74 (DKDENRMEMQEKTEQGKSYLDFAENLLLQKLEELEAKLLEEDSEESRNSRQKR) are excised as a propeptide. A disordered region spans residues 61 to 83 (EEDSEESRNSRQKRCIGEGVPCD). Intrachain disulfides connect Cys-75–Cys-90, Cys-82–Cys-95, and Cys-89–Cys-110.

The protein belongs to the neurotoxin 14 (magi-1) family. 01 (HNTX-16) subfamily. As to expression, expressed by the venom gland.

The protein localises to the secreted. Functionally, probable ion channel inhibitor. This Cyriopagopus hainanus (Chinese bird spider) protein is U11-theraphotoxin-Hhn1c.